A 368-amino-acid polypeptide reads, in one-letter code: Probable endopolygalacturonase I (368 aa).

The N-terminal stretch at 1–18 is a signal peptide; the sequence is MHSFQLLGLAALGSLVAA. Positions 19 to 31 are excised as a propeptide; it reads APSPSRVSDLTER. Residues Cys-35 and Cys-50 are joined by a disulfide bond. 6 PbH1 repeats span residues 162-192, 193-214, 215-235, 244-265, 273-295, and 307-328; these read ANNLHLTDITIDNSDGDSKGGHNTDGFDISE, SNGVYISGANVKNQDDCIAINS, GKNIEFTGGTCSGGHGLSIGS, VQGVKITDSTVTNSDNGIRIKT, VSDVTYSNIKLSGIHKKGIVIQQ, and SNGIPIKDVTVDGITGSVDSKA. Asp-207 (proton donor) is an active-site residue. Residues Cys-209 and Cys-225 are joined by a disulfide bond. Residue His-229 is part of the active site. Disulfide bonds link Cys-335/Cys-340 and Cys-359/Cys-368.

Belongs to the glycosyl hydrolase 28 family.

It localises to the secreted. The catalysed reaction is (1,4-alpha-D-galacturonosyl)n+m + H2O = (1,4-alpha-D-galacturonosyl)n + (1,4-alpha-D-galacturonosyl)m.. Involved in maceration and soft-rotting of plant tissue. Hydrolyzes the 1,4-alpha glycosidic bonds of de-esterified pectate in the smooth region of the plant cell wall. The sequence is that of Probable endopolygalacturonase I (pgaI) from Aspergillus terreus (strain NIH 2624 / FGSC A1156).